A 334-amino-acid polypeptide reads, in one-letter code: MLNTLIVGASGYAGAELVTYVNRHPHMNITALTVSAQSNDAGKLISDLHPQLKGIVDLPLQPMSDISEFSPGVDVVFLATAHEVSHDLAPQFLEAGCVVFDLSGAFRVNDATFYEKYYGFTHQYPELLEQAAYGLAEWCGNKLKEANLIAVPGCYPTAAQLALKPLIDADLLDLNQWPVINATSGVSGAGRKAAISNSFCEVSLQPYGVFTHRHQPEIATHLGADVIFTPHLGNFPRGILETITCRLKSGVTQAQVAQVLQQAYAHKPLVRLYDKGVPALKNVVGLPFCDIGFAVQGEHLIIVATEDNLLKGAAAQAVQCANIRFGYAETQSLI.

C154 is a catalytic residue.

Belongs to the NAGSA dehydrogenase family. Type 1 subfamily.

It is found in the cytoplasm. The catalysed reaction is N-acetyl-L-glutamate 5-semialdehyde + phosphate + NADP(+) = N-acetyl-L-glutamyl 5-phosphate + NADPH + H(+). Its pathway is amino-acid biosynthesis; L-arginine biosynthesis; N(2)-acetyl-L-ornithine from L-glutamate: step 3/4. In terms of biological role, catalyzes the NADPH-dependent reduction of N-acetyl-5-glutamyl phosphate to yield N-acetyl-L-glutamate 5-semialdehyde. The polypeptide is N-acetyl-gamma-glutamyl-phosphate reductase (Escherichia coli (strain K12)).